The following is a 37-amino-acid chain: Hemocyanin subunit B (37 aa).

This sequence belongs to the tyrosinase family. Hemocyanin subfamily. Hemolymph.

Its subcellular location is the secreted. It is found in the extracellular space. In terms of biological role, hemocyanins are copper-containing oxygen carriers occurring freely dissolved in the hemolymph of many mollusks and arthropods. This is Hemocyanin subunit B from Cancer pagurus (Rock crab).